The following is a 156-amino-acid chain: Small ribosomal subunit protein uS7 (156 aa).

The protein belongs to the universal ribosomal protein uS7 family. As to quaternary structure, part of the 30S ribosomal subunit. Contacts proteins S9 and S11.

One of the primary rRNA binding proteins, it binds directly to 16S rRNA where it nucleates assembly of the head domain of the 30S subunit. Is located at the subunit interface close to the decoding center, probably blocks exit of the E-site tRNA. This Salinispora tropica (strain ATCC BAA-916 / DSM 44818 / JCM 13857 / NBRC 105044 / CNB-440) protein is Small ribosomal subunit protein uS7.